A 652-amino-acid chain; its full sequence is Acetyl-coenzyme A synthetase (652 aa).

CoA contacts are provided by residues 189-192, T311, and N335; that span reads RGGK. Residues 387–389, 411–416, D500, and R515 contribute to the ATP site; these read GEP and DTWWQT. S523 serves as a coordination point for CoA. Residue R526 participates in ATP binding. The Mg(2+) site is built by V537, H539, and V542. Residue R584 participates in CoA binding. The residue at position 609 (K609) is an N6-acetyllysine.

Belongs to the ATP-dependent AMP-binding enzyme family. Mg(2+) is required as a cofactor. Post-translationally, acetylated. Deacetylation by the SIR2-homolog deacetylase activates the enzyme.

The catalysed reaction is acetate + ATP + CoA = acetyl-CoA + AMP + diphosphate. Catalyzes the conversion of acetate into acetyl-CoA (AcCoA), an essential intermediate at the junction of anabolic and catabolic pathways. AcsA undergoes a two-step reaction. In the first half reaction, AcsA combines acetate with ATP to form acetyl-adenylate (AcAMP) intermediate. In the second half reaction, it can then transfer the acetyl group from AcAMP to the sulfhydryl group of CoA, forming the product AcCoA. In Rhizobium rhizogenes (strain K84 / ATCC BAA-868) (Agrobacterium radiobacter), this protein is Acetyl-coenzyme A synthetase.